We begin with the raw amino-acid sequence, 238 residues long: Inactive glycoside hydrolase XLP1 (238 aa).

An N-terminal signal peptide occupies residues 1–19; that stretch reads MKSFLIAIVIAVLLPVSAA. Residue E133 is part of the active site. Residues N171 and N187 are each glycosylated (N-linked (GlcNAc...) asparagine). E219 is a catalytic residue.

The protein belongs to the glycosyl hydrolase 12 (cellulase H) family. As to quaternary structure, interacts with host apoplastic glucanase inhibitor GIP2.

Its subcellular location is the secreted. Non-functional secreted XEG1-like protein that binds to host Nicotiana benthamiana apoplastic glucanase inhibitor protein GIP2 more tightly than does XEG1, thus it outcompetes XEG1 for GIP2 binding and frees functional XEG1 to support P.parasitica infection. With XEG1, is required to elevate apoplastic sugar during P.parasitica infection. This chain is Inactive glycoside hydrolase XLP1, found in Phytophthora nicotianae (strain INRA-310) (Phytophthora parasitica).